The chain runs to 208 residues: Bacitracin transport permease protein BCRB (208 aa).

The next 6 membrane-spanning stretches (helical) occupy residues 23–43 (LYIV…YLFN), 70–90 (VLLL…TLLF), 111–131 (FMIG…VTLL), 135–155 (YVPT…VYGT), 159–179 (ALFP…PEYP), and 182–202 (YSFI…IVYF).

The protein resides in the cell membrane. Functionally, part of the binding-protein-dependent transport system for bacitracin that confer resistance to this antibiotic; probably responsible for the translocation of the substrate across the membrane. The chain is Bacitracin transport permease protein BCRB (bcrB) from Bacillus licheniformis.